Here is a 746-residue protein sequence, read N- to C-terminus: Exostosin-1 (746 aa).

The Cytoplasmic segment spans residues 1–7; sequence MQAKKRY. Residues 8-28 traverse the membrane as a helical; Signal-anchor for type II membrane protein segment; that stretch reads FILLSAGSCLALLFYFGGLQF. Residues 29 to 746 are Lumenal-facing; that stretch reads RASRSHSRRE…RKKYRDIERL (718 aa). The N-linked (GlcNAc...) asparagine glycan is linked to Asn-89. Intrachain disulfides connect Cys-98/Cys-103 and Cys-109/Cys-152. Residues Leu-166 and Tyr-203 each coordinate a protein. UDP-binding residues include Lys-267, Lys-269, Tyr-271, and Arg-280. Cys-298 and Cys-312 are disulfide-bonded. His-300 is a binding site for a protein. Positions 319 and 324 each coordinate UDP. An N-linked (GlcNAc...) asparagine glycan is attached at Asn-330. Intrachain disulfides connect Cys-334–Cys-355 and Cys-652–Cys-704. Arg-346 and Glu-349 together coordinate UDP.

The protein belongs to the glycosyltransferase 47 family. As to quaternary structure, part of the heparan sulfate polymerase, a dimeric complex composed of EXT1 and EXT2. Could also form homooligomeric complexes. Interacts with NDST1. In terms of processing, N-glycosylated.

The protein localises to the golgi apparatus membrane. It is found in the golgi apparatus. Its subcellular location is the cis-Golgi network membrane. It localises to the endoplasmic reticulum membrane. The catalysed reaction is 3-O-{alpha-D-GlcNAc-[(1-&gt;4)-beta-D-GlcA-(1-&gt;4)-alpha-D-GlcNAc](n)-(1-&gt;4)-beta-D-GlcA-(1-&gt;3)-beta-D-Gal-(1-&gt;3)-beta-D-Gal-(1-&gt;4)-beta-D-Xyl}-L-seryl-[protein] + UDP-alpha-D-glucuronate = 3-O-{[(1-&gt;4)-beta-D-GlcA-(1-&gt;4)-alpha-D-GlcNAc](n+1)-(1-&gt;4)-beta-D-GlcA-(1-&gt;3)-beta-D-Gal-(1-&gt;3)-beta-D-Gal-(1-&gt;4)-beta-D-Xyl}-L-seryl-[protein] + UDP + H(+). Its pathway is protein modification; protein glycosylation. Its function is as follows. Glycosyltransferase forming with EXT2 the heterodimeric heparan sulfate polymerase which catalyzes the elongation of the heparan sulfate glycan backbone. Glycan backbone extension consists in the alternating transfer of (1-&gt;4)-beta-D-GlcA and (1-&gt;4)-alpha-D-GlcNAc residues from their respective UDP-sugar donors. Both EXT1 and EXT2 are required for the full activity of the polymerase since EXT1 bears the N-acetylglucosaminyl-proteoglycan 4-beta-glucuronosyltransferase activity within the complex while EXT2 carries the glucuronosyl-N-acetylglucosaminyl-proteoglycan 4-alpha-N-acetylglucosaminyltransferase activity. Heparan sulfate proteoglycans are ubiquitous components of the extracellular matrix and play an important role in tissue homeostasis and signaling. The protein is Exostosin-1 (EXT1) of Bos taurus (Bovine).